A 365-amino-acid chain; its full sequence is Peptidylglycine alpha-hydroxylating monooxygenase (365 aa).

A signal peptide spans 1-24 (MPRISEIAASVGLLLLIGVISVDG). Cystine bridges form between Cys-69–Cys-114 and Cys-102–Cys-129. Asn-88 carries N-linked (GlcNAc...) asparagine glycosylation. 2 residues coordinate Cu cation: His-95 and His-96. Residues His-172, His-241, and His-243 each contribute to the Cu cation site. Asn-280 carries an N-linked (GlcNAc...) asparagine glycan. Cys-297 and Cys-318 form a disulfide bridge. Met-317 contributes to the Cu cation binding site.

It belongs to the copper type II ascorbate-dependent monooxygenase family. The cofactor is Cu(2+). As to expression, expressed in the central nervous system (CNS) in a small number of CNS neurons (approximately a few hundred). Expression is present both in cell bodies and within neuropil regions. It is strongly expressed in neuroendocrine neurons (at protein level).

It localises to the secreted. It carries out the reaction a [peptide]-C-terminal glycine + 2 L-ascorbate + O2 = a [peptide]-C-terminal (2S)-2-hydroxyglycine + 2 monodehydro-L-ascorbate radical + H2O. Functionally, monooxygenase that catalyzes an essential reaction in C-terminal alpha-amidation of peptides. Produces an unstable peptidyl(2-hydroxyglycine) intermediate. C-terminal amidation of peptides is required for normal developmental transitions and for biosynthesis of secretory peptides throughout the life. The sequence is that of Peptidylglycine alpha-hydroxylating monooxygenase (Phm) from Drosophila melanogaster (Fruit fly).